The sequence spans 778 residues: Putative ATP-dependent RNA helicase MJ1505 (778 aa).

The Helicase ATP-binding domain maps to 22–186; it reads IAANALKKKT…EICENLGIEH (165 aa). 35-42 lines the ATP pocket; sequence LSTGLGKT. A DEAH box motif is present at residues 137-140; sequence DEAH. One can recognise a Helicase C-terminal domain in the interval 338 to 516; the sequence is KVVDMVKNIL…EIKEETEEIK (179 aa).

This sequence belongs to the DEAD box helicase family. DEAH subfamily.

The catalysed reaction is ATP + H2O = ADP + phosphate + H(+). This chain is Putative ATP-dependent RNA helicase MJ1505, found in Methanocaldococcus jannaschii (strain ATCC 43067 / DSM 2661 / JAL-1 / JCM 10045 / NBRC 100440) (Methanococcus jannaschii).